The following is a 434-amino-acid chain: Hydrogenobyrinate a,c-diamide synthase (434 aa).

The 192-residue stretch at arginine 243–alanine 434 folds into the GATase cobBQ-type domain. Catalysis depends on cysteine 326, which acts as the Nucleophile.

The protein belongs to the CobB/CbiA family. In terms of assembly, homodimer. The cofactor is Mg(2+).

It carries out the reaction hydrogenobyrinate + 2 L-glutamine + 2 ATP + 2 H2O = hydrogenobyrinate a,c-diamide + 2 L-glutamate + 2 ADP + 2 phosphate + 2 H(+). It participates in cofactor biosynthesis; adenosylcobalamin biosynthesis; cob(II)yrinate a,c-diamide from precorrin-2 (aerobic route): step 9/10. Catalyzes the ATP-dependent amidation of the two carboxylate groups at positions a and c of hydrogenobyrinate, using either L-glutamine or ammonia as the nitrogen source. To a much lesser extent, can also use cobyrinate as substrate in vitro, but the physiological substrate is indeed hydrogenobyrinate, as part of the aerobic pathway for cobalamin biosynthesis. The sequence is that of Hydrogenobyrinate a,c-diamide synthase from Sinorhizobium sp.